A 227-amino-acid chain; its full sequence is Enolase-phosphatase E1 (227 aa).

Residues D11 and E13 each coordinate Mg(2+). Substrate contacts are provided by residues 118-119 and K161; that span reads SS. D186 serves as a coordination point for Mg(2+).

Belongs to the HAD-like hydrolase superfamily. MasA/MtnC family. In terms of assembly, monomer. The cofactor is Mg(2+).

The protein localises to the cytoplasm. The protein resides in the nucleus. It catalyses the reaction 5-methylsulfanyl-2,3-dioxopentyl phosphate + H2O = 1,2-dihydroxy-5-(methylsulfanyl)pent-1-en-3-one + phosphate. It functions in the pathway amino-acid biosynthesis; L-methionine biosynthesis via salvage pathway; L-methionine from S-methyl-5-thio-alpha-D-ribose 1-phosphate: step 3/6. Its pathway is amino-acid biosynthesis; L-methionine biosynthesis via salvage pathway; L-methionine from S-methyl-5-thio-alpha-D-ribose 1-phosphate: step 4/6. Bifunctional enzyme that catalyzes the enolization of 2,3-diketo-5-methylthiopentyl-1-phosphate (DK-MTP-1-P) into the intermediate 2-hydroxy-3-keto-5-methylthiopentenyl-1-phosphate (HK-MTPenyl-1-P), which is then dephosphorylated to form the acireductone 1,2-dihydroxy-3-keto-5-methylthiopentene (DHK-MTPene). In Saccharomyces cerevisiae (strain RM11-1a) (Baker's yeast), this protein is Enolase-phosphatase E1.